Consider the following 382-residue polypeptide: Ribosomal RNA large subunit methyltransferase G (382 aa).

Belongs to the methyltransferase superfamily. RlmG family.

The protein localises to the cytoplasm. The catalysed reaction is guanosine(1835) in 23S rRNA + S-adenosyl-L-methionine = N(2)-methylguanosine(1835) in 23S rRNA + S-adenosyl-L-homocysteine + H(+). Its function is as follows. Specifically methylates the guanine in position 1835 (m2G1835) of 23S rRNA. The chain is Ribosomal RNA large subunit methyltransferase G from Aliivibrio salmonicida (strain LFI1238) (Vibrio salmonicida (strain LFI1238)).